Consider the following 185-residue polypeptide: Elongation factor P (185 aa).

Belongs to the elongation factor P family.

Its subcellular location is the cytoplasm. The protein operates within protein biosynthesis; polypeptide chain elongation. In terms of biological role, involved in peptide bond synthesis. Stimulates efficient translation and peptide-bond synthesis on native or reconstituted 70S ribosomes in vitro. Probably functions indirectly by altering the affinity of the ribosome for aminoacyl-tRNA, thus increasing their reactivity as acceptors for peptidyl transferase. The sequence is that of Elongation factor P from Burkholderia lata (strain ATCC 17760 / DSM 23089 / LMG 22485 / NCIMB 9086 / R18194 / 383).